The primary structure comprises 799 residues: Integrin beta-1 (799 aa).

The first 20 residues, 1-20 (MNLQLVFWIGLISLICSVFG), serve as a signal peptide directing secretion. The Extracellular segment spans residues 21–729 (QTDKNRCLKA…ETPDCPTGPD (709 aa)). The region spanning 26-76 (RCLKANAKSCGECIQAGPNCGWCTNTTFLQEGMPTSARCDDLEALKKKGCH) is the PSI domain. 28 cysteine pairs are disulfide-bonded: C27–C45, C35–C465, C38–C64, C48–C75, C207–C213, C261–C301, C401–C415, C435–C463, C467–C487, C478–C490, C492–C501, C503–C534, C517–C532, C526–C537, C539–C554, C556–C577, C561–C575, C569–C580, C582–C591, C593–C616, C600–C614, C608–C619, C621–C631, C634–C637, C641–C692, C647–C666, C650–C662, and C700–C724. 3 N-linked (GlcNAc...) asparagine glycosylation sites follow: N50, N94, and N97. A VWFA domain is found at 140–378 (DYPIDLYYLM…QLIIDAYNSL (239 aa)). Positions 152 and 154 each coordinate Mg(2+). The Ca(2+) site is built by S154, D157, D158, and E189. The CX3CL1-binding stretch occupies residues 207–213 (CTSEQNC). N-linked (GlcNAc...) asparagine glycosylation is present at N212. Residues N244, D246, P248, and E249 each coordinate Ca(2+). Residue E249 participates in Mg(2+) binding. A glycan (N-linked (GlcNAc...) asparagine) is linked at N269. Residues 295-314 (LPNDGQCHLENNVYTMSHYY) form a CX3CL1-binding region. G362 contacts Ca(2+). Residues N363, N406, and N417 are each glycosylated (N-linked (GlcNAc...) asparagine). The tract at residues 383–466 (ILENSKLPDG…VVLQFICKCN (84 aa)) is interaction with TMEM182. I-EGF domains lie at 467 to 502 (CQSH…RHCE), 503 to 555 (CSTD…KFCE), 556 to 592 (CDNF…SACD), and 593 to 632 (CSLD…PTCE). N482 carries an N-linked (GlcNAc...) asparagine glycan. N521 is a glycosylation site (N-linked (GlcNAc...) asparagine). N585 carries N-linked (GlcNAc...) asparagine glycosylation. N670 is a glycosylation site (N-linked (GlcNAc...) asparagine). Residues 730–752 (IIPIVAGVVAGIVLIGLALLLIW) form a helical membrane-spanning segment. At 753 to 799 (KLLMIIHDRREFAKFEKEKMNAKWDTGENPIYKSAVTTVVNPKYEGK) the chain is on the cytoplasmic side. Residues 763-768 (EFAKFE) form a signal for sorting from recycling endosomes; interaction with ACAP1 region. Phosphothreonine is present on T778. Residue Y784 is modified to Phosphotyrosine. S786 is subject to Phosphoserine. Residues 786 to 793 (SAVTTVVN) form an interaction with ITGB1BP1 region. Position 790 is a phosphothreonine (T790). The residue at position 795 (K795) is an N6-acetyllysine; alternate. K795 participates in a covalent cross-link: Glycyl lysine isopeptide (Lys-Gly) (interchain with G-Cter in SUMO1); alternate.

This sequence belongs to the integrin beta chain family. As to quaternary structure, interacts with seprase FAP (seprase); the interaction occurs at the cell surface of invadopodia membrane in a collagen-dependent manner. Heterodimer of an alpha and a beta subunit. Beta-1 associates with either alpha-1, alpha-2, alpha-3, alpha-4, alpha-5, alpha-6, alpha-7, alpha-8, alpha-9, alpha-10, alpha-11 or alpha-V. ITGA6:ITGB1 is found in a complex with CD9; interaction takes place in oocytes and is involved in sperm-egg fusion. Binds LGALS3BP and NMRK2, when associated with alpha-7, but not with alpha-5. Interacts with FLNA, FLNB, FLNC and RANBP9. Interacts with KRT1 in the presence of RACK1 and SRC. Interacts with JAML; integrin alpha-4/beta-1 may regulate leukocyte to endothelial cells adhesion by controlling JAML homodimerization. Interacts with RAB21. Interacts (via the cytoplasmic region) with RAB25 (via the hypervariable C-terminal region). Interacts with MYO10. Interacts with ITGB1BP1 (via C-terminal region); the interaction is a prerequisite for focal adhesion disassembly. Interacts with TLN1; the interaction is prevented by competitive binding of ITGB1BP1. Interacts with ACAP1; required for ITGB1 recycling. Interacts with ASAP3. Interacts with FERMT2; the interaction is inhibited in presence of ITGB1BP1. Interacts with DAB2. Interacts with FGR and HCK. Interacts with alpha-7A and alpha-7B in adult skeletal muscle. Interacts with alpha-7B in cardiomyocytes of adult heart. Interacts with EMP2; the interaction may be direct or indirect and ITGB1 has a heterodimer form. ITGA5:ITGB1 interacts with CCN3. ITGA4:ITGB1 is found in a ternary complex with CX3CR1 and CX3CL1. ITGA5:ITGB1 interacts with FBN1. ITGA5:ITGB1 acts as a receptor for fibronectin FN1 and mediates R-G-D-dependent cell adhesion to FN1. ITGA5:ITGB1 interacts with IL1B. Interacts with MDK. ITGA4:ITGB1 interacts with MDK; this interaction mediates MDK-induced osteoblast cells migration through PXN phosphorylation. ITGA6:ITGB1 interacts with MDK; this interaction mediates MDK-induced neurite-outgrowth. ITGA5:ITGB1 interacts with ACE2. Interacts with TMEM182 and LAMB1. Interacts with tensin TNS3; TNS3 also interacts with PEAK1, thus acting as an adapter molecule to bridge the association of PEAK1 with ITGB1. Interacts with tensin TNS4; the interaction displaces tensin TNS3 from the ITGB1 cytoplasmic tail and promotes ITGB1 stability. Integrin ITGA9:ITGB1 interacts with SPP1/OPN (via N-terminus). Integrin ITGA9:ITGB1 interacts with TNC/TNFN3 (via the 3rd Fibronectin type-III domain). Integrins ITGA4:ITGB1 and ITGA9:ITGB1 interact with SVEP1 (via Sushi domain 21); thereby inhibit Ca(2+) intracellular signaling and as a result repress vasocontraction. ITGA4:ITGB1 and ITGA5:ITGB1 interacts with SELP. ITGA5:ITGB1 interacts with IGFBP1. ITGA4:ITGB1 interacts with BCAM. Interacts with ADGRG6.

Its subcellular location is the cell membrane. It localises to the cell projection. The protein resides in the invadopodium membrane. It is found in the ruffle membrane. The protein localises to the recycling endosome. Its subcellular location is the melanosome. It localises to the lamellipodium. The protein resides in the ruffle. It is found in the cell junction. The protein localises to the focal adhesion. Its function is as follows. Integrins alpha-1/beta-1, alpha-2/beta-1, alpha-10/beta-1 and alpha-11/beta-1 are receptors for collagen. Integrins alpha-1/beta-1 and alpha-2/beta-2 recognize the proline-hydroxylated sequence G-F-P-G-E-R in collagen. Integrins alpha-2/beta-1, alpha-3/beta-1, alpha-4/beta-1, alpha-5/beta-1, alpha-8/beta-1, alpha-10/beta-1, alpha-11/beta-1 and alpha-V/beta-1 are receptors for fibronectin. Alpha-4/beta-1 recognizes one or more domains within the alternatively spliced CS-1 and CS-5 regions of fibronectin. Integrin alpha-5/beta-1 is a receptor for fibrinogen. Integrin alpha-1/beta-1, alpha-2/beta-1, alpha-6/beta-1 and alpha-7/beta-1 are receptors for lamimin. Integrin alpha-6/beta-1 (ITGA6:ITGB1) is present in oocytes and is involved in sperm-egg fusion. Integrin alpha-4/beta-1 is a receptor for VCAM1 and recognizes the sequence Q-I-D-S in VCAM1. Integrin alpha-9/beta-1 is a receptor for VCAM1, cytotactin and osteopontin. It recognizes the sequence A-E-I-D-G-I-E-L in cytotactin. Integrin alpha-3/beta-1 is a receptor for epiligrin, thrombospondin and CSPG4. Integrin alpha-3/beta-1 provides a docking site for FAP (seprase) at invadopodia plasma membranes in a collagen-dependent manner and hence may participate in the adhesion, formation of invadopodia and matrix degradation processes, promoting cell invasion. Alpha-3/beta-1 may mediate with LGALS3 the stimulation by CSPG4 of endothelial cells migration. Integrin alpha-V/beta-1 is a receptor for vitronectin. Beta-1 integrins recognize the sequence R-G-D in a wide array of ligands. When associated with alpha-7/beta-1 integrin, regulates cell adhesion and laminin matrix deposition. Involved in promoting endothelial cell motility and angiogenesis. Involved in osteoblast compaction through the fibronectin fibrillogenesis cell-mediated matrix assembly process and the formation of mineralized bone nodules. May be involved in up-regulation of the activity of kinases such as PKC via binding to KRT1. Together with KRT1 and RACK1, serves as a platform for SRC activation or inactivation. Plays a mechanistic adhesive role during telophase, required for the successful completion of cytokinesis. ITGA4:ITGB1 binds to fractalkine (CX3CL1) and may act as its coreceptor in CX3CR1-dependent fractalkine signaling. ITGA4:ITGB1 and ITGA5:ITGB1 bind to PLA2G2A via a site (site 2) which is distinct from the classical ligand-binding site (site 1) and this induces integrin conformational changes and enhanced ligand binding to site 1. ITGA5:ITGB1 acts as a receptor for fibrillin-1 (FBN1) and mediates R-G-D-dependent cell adhesion to FBN1. ITGA5:ITGB1 is a receptor for IL1B and binding is essential for IL1B signaling. ITGA5:ITGB3 is a receptor for soluble CD40LG and is required for CD40/CD40LG signaling. Plays an important role in myoblast differentiation and fusion during skeletal myogenesis. ITGA9:ITGB1 may play a crucial role in SVEP1/polydom-mediated myoblast cell adhesion. Integrins ITGA9:ITGB1 and ITGA4:ITGB1 repress PRKCA-mediated L-type voltage-gated channel Ca(2+) influx and ROCK-mediated calcium sensitivity in vascular smooth muscle cells via their interaction with SVEP1, thereby inhibit vasocontraction. This Rattus norvegicus (Rat) protein is Integrin beta-1 (Itgb1).